The chain runs to 599 residues: Elongation factor 4 (599 aa).

A tr-type G domain is found at 2-185 (ENIRNFSIIA…AITKRIPPPK (184 aa)). GTP is bound by residues 14–19 (DHGKST) and 132–135 (NKID).

It belongs to the TRAFAC class translation factor GTPase superfamily. Classic translation factor GTPase family. LepA subfamily.

Its subcellular location is the cell inner membrane. The catalysed reaction is GTP + H2O = GDP + phosphate + H(+). Functionally, required for accurate and efficient protein synthesis under certain stress conditions. May act as a fidelity factor of the translation reaction, by catalyzing a one-codon backward translocation of tRNAs on improperly translocated ribosomes. Back-translocation proceeds from a post-translocation (POST) complex to a pre-translocation (PRE) complex, thus giving elongation factor G a second chance to translocate the tRNAs correctly. Binds to ribosomes in a GTP-dependent manner. The chain is Elongation factor 4 from Hydrogenobaculum sp. (strain Y04AAS1).